Here is a 453-residue protein sequence, read N- to C-terminus: Allantoinase (453 aa).

Zn(2+)-binding residues include His-59, His-61, Lys-146, His-186, His-242, and Asp-315. Lys-146 is modified (N6-carboxylysine).

It belongs to the metallo-dependent hydrolases superfamily. Allantoinase family. As to quaternary structure, homotetramer. Zn(2+) is required as a cofactor. Post-translationally, carboxylation allows a single lysine to coordinate two zinc ions.

It carries out the reaction (S)-allantoin + H2O = allantoate + H(+). It participates in nitrogen metabolism; (S)-allantoin degradation; allantoate from (S)-allantoin: step 1/1. Functionally, catalyzes the conversion of allantoin (5-ureidohydantoin) to allantoic acid by hydrolytic cleavage of the five-member hydantoin ring. The polypeptide is Allantoinase (Salmonella paratyphi B (strain ATCC BAA-1250 / SPB7)).